The following is a 244-amino-acid chain: tRNA (guanine-N(7)-)-methyltransferase (244 aa).

Residues 1-24 (MTDSHVPHPESPAVEEGEERPHRR) form a disordered region. S-adenosyl-L-methionine-binding residues include Glu74, Glu99, Asp126, and Asp149. The active site involves Asp149. Residues Lys153, Asp185, and 222–225 (TKFE) each bind substrate.

It belongs to the class I-like SAM-binding methyltransferase superfamily. TrmB family.

It catalyses the reaction guanosine(46) in tRNA + S-adenosyl-L-methionine = N(7)-methylguanosine(46) in tRNA + S-adenosyl-L-homocysteine. It participates in tRNA modification; N(7)-methylguanine-tRNA biosynthesis. Functionally, catalyzes the formation of N(7)-methylguanine at position 46 (m7G46) in tRNA. The chain is tRNA (guanine-N(7)-)-methyltransferase from Pseudomonas syringae pv. syringae (strain B728a).